The chain runs to 637 residues: tRNA 5-methylaminomethyl-2-thiouridine biosynthesis bifunctional protein MnmC (637 aa).

Residues 1–231 (MPIDPARLAF…KRQMCRGRHR (231 aa)) are tRNA (mnm(5)s(2)U34)-methyltransferase. The FAD-dependent cmnm(5)s(2)U34 oxidoreductase stretch occupies residues 250-637 (IGAGLAGSST…RPARGMTREG (388 aa)).

It in the N-terminal section; belongs to the methyltransferase superfamily. tRNA (mnm(5)s(2)U34)-methyltransferase family. The protein in the C-terminal section; belongs to the DAO family. Requires FAD as cofactor.

It is found in the cytoplasm. The enzyme catalyses 5-aminomethyl-2-thiouridine(34) in tRNA + S-adenosyl-L-methionine = 5-methylaminomethyl-2-thiouridine(34) in tRNA + S-adenosyl-L-homocysteine + H(+). Its function is as follows. Catalyzes the last two steps in the biosynthesis of 5-methylaminomethyl-2-thiouridine (mnm(5)s(2)U) at the wobble position (U34) in tRNA. Catalyzes the FAD-dependent demodification of cmnm(5)s(2)U34 to nm(5)s(2)U34, followed by the transfer of a methyl group from S-adenosyl-L-methionine to nm(5)s(2)U34, to form mnm(5)s(2)U34. This is tRNA 5-methylaminomethyl-2-thiouridine biosynthesis bifunctional protein MnmC from Aromatoleum aromaticum (strain DSM 19018 / LMG 30748 / EbN1) (Azoarcus sp. (strain EbN1)).